Reading from the N-terminus, the 216-residue chain is Pathogenicity-related ORF2 (216 aa).

4 helical membrane-spanning segments follow: residues 6–26 (VGSLLLVVVIMLGLLPFAAMV), 55–75 (LNGVALLVSCFVMAPVGMEAF), 157–177 (IGFLLYLVFIVIDLVVANALM), and 193–213 (FKLLLFVAMDGWSMLIHGLVL).

Belongs to the FliP/MopC/SpaP family.

The protein resides in the cell membrane. Important for pathogenicity. The protein is Pathogenicity-related ORF2 of Xanthomonas campestris pv. glycines.